A 481-amino-acid polypeptide reads, in one-letter code: NADH-quinone oxidoreductase subunit N (481 aa).

Helical transmembrane passes span 14–34 (LILSVGALLLLLVAAFGGDGF), 38–57 (IGWGAVALFAAAGFSLTGPA), 76–96 (FAKLLIYIAAAVSVAVAPGFF), 108–128 (PVLILLSGVGMGMMVSAGDLL), 162–182 (FVLGALASGILLYGISLLYGF), 204–224 (MFGMVFVFAGLAFKISAVPFH), 235–255 (PTPVTAFFASAPKVAGMALLL), 272–292 (IVVFAALASTILGAVAAIGQT), 297–317 (LLAYSSINNVGFALFGLAAGS), 323–343 (ATMTYMAVYVAMTLGSFICVL), 369–389 (LAAAFAIFMFSLAGIPPLFGF), 403–423 (GFWPLAMVGIATSVIGAFYYL), and 449–469 (GLITLAALAVSPLGYLAIPLL).

The protein belongs to the complex I subunit 2 family. In terms of assembly, NDH-1 is composed of 14 different subunits. Subunits NuoA, H, J, K, L, M, N constitute the membrane sector of the complex.

It is found in the cell inner membrane. The catalysed reaction is a quinone + NADH + 5 H(+)(in) = a quinol + NAD(+) + 4 H(+)(out). Functionally, NDH-1 shuttles electrons from NADH, via FMN and iron-sulfur (Fe-S) centers, to quinones in the respiratory chain. The immediate electron acceptor for the enzyme in this species is believed to be ubiquinone. Couples the redox reaction to proton translocation (for every two electrons transferred, four hydrogen ions are translocated across the cytoplasmic membrane), and thus conserves the redox energy in a proton gradient. This Rhizorhabdus wittichii (strain DSM 6014 / CCUG 31198 / JCM 15750 / NBRC 105917 / EY 4224 / RW1) (Sphingomonas wittichii) protein is NADH-quinone oxidoreductase subunit N.